We begin with the raw amino-acid sequence, 148 residues long: Large ribosomal subunit protein eL19 (148 aa).

The segment covering 52-76 has biased composition (basic residues); that stretch reads KPKKGISSYRSKKIAQQKKKGRRRG. The tract at residues 52–95 is disordered; that stretch reads KPKKGISSYRSKKIAQQKKKGRRRGPGSIKGAKGARRPKKDEWM.

The protein belongs to the eukaryotic ribosomal protein eL19 family. In terms of assembly, part of the 50S ribosomal subunit.

Its function is as follows. Binds to the 23S rRNA. The polypeptide is Large ribosomal subunit protein eL19 (Methanothermobacter thermautotrophicus (strain ATCC 29096 / DSM 1053 / JCM 10044 / NBRC 100330 / Delta H) (Methanobacterium thermoautotrophicum)).